A 389-amino-acid polypeptide reads, in one-letter code: MKFVDEAVIKVQAGDGGSGCVSFRREKYIPDGGPDGGDGGDGGSVYLVADASLNTLIDYRFERFYLAERGENGRGRDCTGKGGSDLTLRVPVGTRAVDIDTDEVLGDLTEVGQKLLVAKGGFHGLGNTRFKSSVNRAPRQKTLGTKGEVRELRLELLLLADVGLLGMPNAGKSTFIRAVSRATPKVADYPFTTLVPNLGVVNPRPGQSFVIADIPGLIEGAAEGAGLGIRFLKHLERCRVLLHILDIEPIDGSSPAESARAIVAELEKYSPELAAKPRWLVFNKTDLLLEEELQERVDAIVAELGWEGDVYTMSAATREGTKELAEKLFDFIKSLPDEAAAADPDKEVEFKWDNYHKAQLDDLNPDFDDSDDDDDFDDDDYDVEVIYQR.

Positions 1-159 (MKFVDEAVIK…RELRLELLLL (159 aa)) constitute an Obg domain. The 174-residue stretch at 160–333 (ADVGLLGMPN…LAEKLFDFIK (174 aa)) folds into the OBG-type G domain. Residues 166 to 173 (GMPNAGKS), 191 to 195 (FTTLV), 213 to 216 (DIPG), 283 to 286 (NKTD), and 314 to 316 (SAA) contribute to the GTP site. Mg(2+)-binding residues include S173 and T193.

This sequence belongs to the TRAFAC class OBG-HflX-like GTPase superfamily. OBG GTPase family. As to quaternary structure, monomer. Mg(2+) serves as cofactor.

The protein localises to the cytoplasm. In terms of biological role, an essential GTPase which binds GTP, GDP and possibly (p)ppGpp with moderate affinity, with high nucleotide exchange rates and a fairly low GTP hydrolysis rate. Plays a role in control of the cell cycle, stress response, ribosome biogenesis and in those bacteria that undergo differentiation, in morphogenesis control. The chain is GTPase Obg from Shewanella amazonensis (strain ATCC BAA-1098 / SB2B).